Here is a 544-residue protein sequence, read N- to C-terminus: Epidermal growth factor-like protein 6 (544 aa).

Residues 1–30 (MAITGGMQSSDMVLLLWITVICACCSFVDS) form the signal peptide. The 36-residue stretch at 63–98 (RKGQCEAVCEQGCKHGECVGPNKCKCFPGFTGKNCN) folds into the EGF-like 1 domain. 6 disulfides stabilise this stretch: cysteine 67–cysteine 80, cysteine 71–cysteine 86, cysteine 88–cysteine 97, cysteine 104–cysteine 115, cysteine 111–cysteine 124, and cysteine 126–cysteine 138. The EGF-like 2; calcium-binding domain occupies 100-139 (DLNECGLKPRPCEHRCMNTHGSYKCYCLNGYMLMPDGSCS). Residues 144–178 (CAMANCQYGCEQVKGDIRCLCPSGGLQLGPDGRTC) form the EGF-like 3 domain. Residues 180-218 (DIDECAVGKASCPINRRCVNTFGSYYCKCQIGYELKYVN) enclose the EGF-like 4; calcium-binding domain. 5 cysteine pairs are disulfide-bonded: cysteine 184-cysteine 197, cysteine 191-cysteine 206, cysteine 229-cysteine 242, cysteine 236-cysteine 251, and cysteine 253-cysteine 264. The 41-residue stretch at 225–265 (DINECLLNTHKCSINADCLNTQGSFKCRCKHGFKGNGQECS) folds into the EGF-like 5; calcium-binding domain. Positions 332 to 357 (GNDNDEEEGEIEEEEEEELDEEDEEN) are disordered. Residues 333–367 (NDNDEEEGEIEEEEEEELDEEDEENVIEEEKLLRG) are a coiled coil. Over residues 334–357 (DNDEEEGEIEEEEEEELDEEDEEN) the composition is skewed to acidic residues. An MAM domain is found at 399-543 (VDCRFDQGTC…VFLSSGPCSD (145 aa)).

It belongs to the nephronectin family.

It is found in the secreted. Its subcellular location is the extracellular space. The protein resides in the extracellular matrix. The protein localises to the basement membrane. May play a role in organ morphogenesis. Promotes matrix assembly. The sequence is that of Epidermal growth factor-like protein 6 (egfl6) from Xenopus laevis (African clawed frog).